The primary structure comprises 220 residues: MTGVGENQLISIQPDELKFLFELEKQSYCDLKVANKTENYVAFKVKTTSPKKYFVRPNTGVIQPWDSCIIRVTLQAQREYPPDMQCKDKFLLQSTIVPPHTDVDELPQDTFTKDSGKTLTECKLKVSYITPSTTQRSSESGATNGDGQSSETISTIQRLKEERDAAVKQTQQLQHELETVRRRRNQRNSGNGLSLKLAAMVGLIGLIIGFILKLTLASPT.

Residue Met-1 is modified to N-acetylmethionine. Residues 1–196 lie on the Cytoplasmic side of the membrane; it reads MTGVGENQLI…RNSGNGLSLK (196 aa). At Thr-2 the chain carries N-acetylthreonine; in Vesicle-associated protein 2-1, N-terminally processed. The MSP domain maps to 9–129; it reads LISIQPDELK…TECKLKVSYI (121 aa). Positions 133 to 154 are disordered; the sequence is TTQRSSESGATNGDGQSSETIS. Residues 153-188 are a coiled coil; sequence ISTIQRLKEERDAAVKQTQQLQHELETVRRRRNQRN. A helical; Anchor for type IV membrane protein transmembrane segment spans residues 197–217; the sequence is LAAMVGLIGLIIGFILKLTLA.

Belongs to the VAMP-associated protein (VAP) (TC 9.B.17) family.

Its subcellular location is the endoplasmic reticulum membrane. Functionally, may play a role in vesicle trafficking. The sequence is that of Vesicle-associated protein 2-1 (PVA21) from Arabidopsis thaliana (Mouse-ear cress).